Here is an 870-residue protein sequence, read N- to C-terminus: Suppressor of yeast profilin deletion (870 aa).

Positions 252–267 are enriched in polar residues; sequence SSSSKEVVPNNASPAS. Disordered stretches follow at residues 252 to 298 and 310 to 574; these read SSSS…RKSA and SSSL…TLSS. A Glycyl lysine isopeptide (Lys-Gly) (interchain with G-Cter in ubiquitin) cross-link involves residue K256. At S264 the chain carries Phosphoserine. Residues 283–292 show a composition bias toward basic and acidic residues; it reads TEREKKSPQK. The segment covering 310-323 has biased composition (polar residues); that stretch reads SSSLTHNDLMNNEF. The residue at position 331 (S331) is a Phosphoserine. The span at 333–342 shows a compositional bias: basic residues; it reads KSKKSSHTLR. Polar residues predominate over residues 367–378; it reads HIQASITETPNN. Over residues 379–390 the composition is skewed to low complexity; it reads SSTRVSSTATSS. Over residues 398–409 the composition is skewed to polar residues; that stretch reads PTYSSSKSNNWT. Position 416 is a phosphothreonine (T416). The span at 473-485 shows a compositional bias: low complexity; that stretch reads PISISQPPLQPQS. 2 positions are modified to phosphoserine: S496 and S500. A compositionally biased stretch (polar residues) spans 497-514; that stretch reads PSISLPTATVDNQPSGQV. At T577 the chain carries Phosphothreonine. An MHD domain is found at 609 to 869; sequence QFGLNASIAE…TLTTGNYHGL (261 aa).

It belongs to the SYP1 family. In terms of assembly, interacts with CDC3, CDC10, CDC11, CDC12, EDE1 and EPS15.

It localises to the bud neck. In terms of biological role, multi-functional protein that contributes to the endocytic process, but also to events that occur at the neck during budding and/or cytokinesis. Plays a role as an endocytic adapters with membrane-tubulation activity that associates with transmembrane cargo proteins and initiates the formation of endocytic sites. Contributes to the stabilization of the nascent clathrin-coated pit. Also plays a role in late endocytosis by mediating vesiculation. Involved in the regulation of cell cycle-dependent dynamics of the septin cytoskeleton by promoting septin turnover in different cell cycle stages. May act through the RHO2 signaling pathway to repolarize cortical actin patches in profilin-deficient cells. The polypeptide is Suppressor of yeast profilin deletion (SYP1) (Saccharomyces cerevisiae (strain ATCC 204508 / S288c) (Baker's yeast)).